Consider the following 415-residue polypeptide: Gamma-glutamyl phosphate reductase (415 aa).

It belongs to the gamma-glutamyl phosphate reductase family.

It is found in the cytoplasm. It catalyses the reaction L-glutamate 5-semialdehyde + phosphate + NADP(+) = L-glutamyl 5-phosphate + NADPH + H(+). Its pathway is amino-acid biosynthesis; L-proline biosynthesis; L-glutamate 5-semialdehyde from L-glutamate: step 2/2. In terms of biological role, catalyzes the NADPH-dependent reduction of L-glutamate 5-phosphate into L-glutamate 5-semialdehyde and phosphate. The product spontaneously undergoes cyclization to form 1-pyrroline-5-carboxylate. In Bacillus cereus (strain B4264), this protein is Gamma-glutamyl phosphate reductase.